The primary structure comprises 253 residues: NAD-dependent protein deacylase 2 (253 aa).

The Deacetylase sirtuin-type domain maps to 1-252 (MEDEIRKAAE…VEEVKRLRSE (252 aa)). NAD(+) contacts are provided by residues 23 to 42 (GAGI…DGLW) and 100 to 103 (QNID). The active-site Proton acceptor is the His118. Zn(2+)-binding residues include Cys126, Cys129, Cys150, and Cys153. Residues 191 to 193 (GSS), 217 to 219 (NAE), and Ala235 each bind NAD(+).

Belongs to the sirtuin family. Class III subfamily. Zn(2+) is required as a cofactor.

The protein resides in the cytoplasm. The catalysed reaction is N(6)-acetyl-L-lysyl-[protein] + NAD(+) + H2O = 2''-O-acetyl-ADP-D-ribose + nicotinamide + L-lysyl-[protein]. In terms of biological role, NAD-dependent protein deacetylase which modulates the activities of several proteins which are inactive in their acetylated form. Deacetylates the N-terminal lysine residue of Alba, the major archaeal chromatin protein and that, in turn, increases Alba's DNA binding affinity, thereby repressing transcription. The chain is NAD-dependent protein deacylase 2 from Archaeoglobus fulgidus (strain ATCC 49558 / DSM 4304 / JCM 9628 / NBRC 100126 / VC-16).